Here is a 790-residue protein sequence, read N- to C-terminus: MFEVKMGSKMCMNASCGTTSTVEWKKGWPLRSGLLADLCYRCGSAYESSLFCEQFHKDQSGWRECYLCSKRLHCGCIASKVTIELMDYGGVGCSTCACCHQLNLNTRGENPGVFSRLPMKTLADRQHVNGESGGRNEGDLFSQPLVMGGDKREEFMPHRGFGKLMSPESTTTGHRLDAAGEMHESSPLQPSLNMGLAVNPFSPSFATEAVEGMKHISPSQSNMVHCSASNILQKPSRPAISTPPVASKSAQARIGRPPVEGRGRGHLLPRYWPKYTDKEVQQISGNLNLNIVPLFEKTLSASDAGRIGRLVLPKACAEAYFPPISQSEGIPLKIQDVRGREWTFQFRYWPNNNSRMYVLEGVTPCIQSMMLQAGDTVTFSRVDPGGKLIMGSRKAANAGDMQGCGLTNGTSTEDTSSSGVTENPPSINGSSCISLIPKELNGMPENLNSETNGGRIGDDPTRVKEKKRTRTIGAKNKRLLLHSEESMELRLTWEEAQDLLRPSPSVKPTIVVIEEQEIEEYDEPPVFGKRTIVTTKPSGEQERWATCDDCSKWRRLPVDALLSFKWTCIDNVWDVSRCSCSAPEESLKELENVLKVGREHKKRRTGESQAAKSQQEPCGLDALASAAVLGDTIGEPEVATTTRHPRHRAGCSCIVCIQPPSGKGRHKPTCGCTVCSTVKRRFKTLMMRRKKKQLERDVTAAEDKKKKDMELAESDKSKEEKEVNTARIDLNSDPYNKEDVEAVAVEKEESRKRAIGQCSGVVAQDASDVLGVTELEGEGKNVREEPRVSS.

The tract at residues 234–260 is disordered; sequence KPSRPAISTPPVASKSAQARIGRPPVE. Positions 295–396 form a DNA-binding region, TF-B3; it reads FEKTLSASDA…KLIMGSRKAA (102 aa). Disordered regions lie at residues 400-429 and 446-468; these read DMQG…SING and NLNS…EKKR. Residues 405–429 are compositionally biased toward polar residues; it reads GLTNGTSTEDTSSSGVTENPPSING. Residues 538–588 form a CW-type zinc finger; it reads SGEQERWATCDDCSKWRRLPVDALLSFKWTCIDNVWDVSRCSCSAPEESLK. Residues cysteine 547, cysteine 550, cysteine 568, and cysteine 580 each coordinate Zn(2+). Positions 685–732 form a coiled coil; it reads LMMRRKKKQLERDVTAAEDKKKKDMELAESDKSKEEKEVNTARIDLNS. Residues 689–737 are disordered; that stretch reads RKKKQLERDVTAAEDKKKKDMELAESDKSKEEKEVNTARIDLNSDPYNK. Over residues 694-724 the composition is skewed to basic and acidic residues; sequence LERDVTAAEDKKKKDMELAESDKSKEEKEVN.

Interacts with SNL1. Expressed in flowers and at lower levels in roots, stems and leaves.

It localises to the nucleus. Transcriptional repressor of gene expression involved in embryonic pathways, such as LEC1, ABI3, and FUS3. Repressor of the sugar-inducible genes involved in the seed maturation program in seedlings. Plays an essential role in regulating the transition from seed maturation to seedling growth. Functionally redundant with VAL2/HSL1. This Arabidopsis thaliana (Mouse-ear cress) protein is B3 domain-containing transcription repressor VAL1 (VAL1).